The following is a 369-amino-acid chain: Phospho-N-acetylmuramoyl-pentapeptide-transferase (369 aa).

10 helical membrane-spanning segments follow: residues 3 to 23 (ALLFAGAFSLAFTLFLTPLFI), 53 to 73 (GGIVIILASVLGYFVGHLLTW), 81 to 101 (VTPSGLLVVFMMVGLGFVGFL), 118 to 138 (WQKIAGQVVVATVFAVLAITL), 162 to 182 (FMALGAVIGTGLFIVWICLIV), 198 to 218 (LAAGASIFSIGSYVIIGFWQF), 240 to 260 (PLDLAIIAASIVGALIGFLWW), 267 to 287 (IFMGDTGSLGLGGALAALAIL), 290 to 310 (TELLLVFIGGLFVIVAGSVVL), and 347 to 367 (FWIIAGLLVAAGVGTFYLEWI).

The protein belongs to the glycosyltransferase 4 family. MraY subfamily. Requires Mg(2+) as cofactor.

It localises to the cell membrane. It catalyses the reaction UDP-N-acetyl-alpha-D-muramoyl-L-alanyl-gamma-D-glutamyl-meso-2,6-diaminopimeloyl-D-alanyl-D-alanine + di-trans,octa-cis-undecaprenyl phosphate = di-trans,octa-cis-undecaprenyl diphospho-N-acetyl-alpha-D-muramoyl-L-alanyl-D-glutamyl-meso-2,6-diaminopimeloyl-D-alanyl-D-alanine + UMP. The protein operates within cell wall biogenesis; peptidoglycan biosynthesis. Catalyzes the initial step of the lipid cycle reactions in the biosynthesis of the cell wall peptidoglycan: transfers peptidoglycan precursor phospho-MurNAc-pentapeptide from UDP-MurNAc-pentapeptide onto the lipid carrier undecaprenyl phosphate, yielding undecaprenyl-pyrophosphoryl-MurNAc-pentapeptide, known as lipid I. This Clavibacter michiganensis subsp. michiganensis (strain NCPPB 382) protein is Phospho-N-acetylmuramoyl-pentapeptide-transferase.